Consider the following 634-residue polypeptide: Lamin tail domain-containing protein 2 (634 aa).

A disordered region spans residues methionine 1–alanine 44. Residues serine 106–arginine 169 are a coiled coil. Positions phenylalanine 228–glutamine 237 are enriched in polar residues. Disordered stretches follow at residues phenylalanine 228–aspartate 349 and histidine 464–alanine 575. Residues serine 276–serine 287 show a composition bias toward low complexity. Over residues serine 310 to serine 321 the composition is skewed to polar residues. Basic and acidic residues predominate over residues arginine 322–glutamate 337. An LTD domain is found at histidine 350–arginine 468. Residues proline 502–arginine 513 show a composition bias toward basic residues. The segment covering histidine 540 to asparagine 550 has biased composition (basic and acidic residues).

The sequence is that of Lamin tail domain-containing protein 2 (LMNTD2) from Homo sapiens (Human).